Here is an 84-residue protein sequence, read N- to C-terminus: Cytochrome b559 subunit alpha (84 aa).

A helical membrane pass occupies residues 22–36; that stretch reads IIHSITIPSLFVAGF. Histidine 24 provides a ligand contact to heme.

This sequence belongs to the PsbE/PsbF family. Heterodimer of an alpha subunit and a beta subunit. PSII is composed of 1 copy each of membrane proteins PsbA, PsbB, PsbC, PsbD, PsbE, PsbF, PsbH, PsbI, PsbJ, PsbK, PsbL, PsbM, PsbT, PsbX, PsbY, PsbZ, Psb30/Ycf12, at least 3 peripheral proteins of the oxygen-evolving complex and a large number of cofactors. It forms dimeric complexes. The cofactor is heme b.

The protein localises to the plastid. It localises to the chloroplast thylakoid membrane. Its function is as follows. This b-type cytochrome is tightly associated with the reaction center of photosystem II (PSII). PSII is a light-driven water:plastoquinone oxidoreductase that uses light energy to abstract electrons from H(2)O, generating O(2) and a proton gradient subsequently used for ATP formation. It consists of a core antenna complex that captures photons, and an electron transfer chain that converts photonic excitation into a charge separation. The polypeptide is Cytochrome b559 subunit alpha (Emiliania huxleyi (Coccolithophore)).